We begin with the raw amino-acid sequence, 849 residues long: Cytosolic phospholipase A2 zeta (849 aa).

A C2 domain is found at 27–145 (EKRGPLWRHW…KCGQPHKHTF (119 aa)). Residues D60, D66, D116, D118, and D123 each coordinate Ca(2+). The PLA2c domain occupies 306-849 (EMSSGDLDLR…RHQARERAGA (544 aa)). S395 serves as the catalytic Nucleophile. D680 acts as the Proton acceptor in catalysis.

The cofactor is Ca(2+). As to expression, expressed in myocardium (at protein level).

It is found in the cytoplasm. It localises to the cytosol. The protein localises to the cell membrane. The protein resides in the mitochondrion. It carries out the reaction a 1,2-diacyl-sn-glycero-3-phosphocholine + H2O = a 1-acyl-sn-glycero-3-phosphocholine + a fatty acid + H(+). It catalyses the reaction a 1-O-alkyl-2-acyl-sn-glycero-3-phosphocholine + H2O = a 1-O-alkyl-sn-glycero-3-phosphocholine + a fatty acid + H(+). The catalysed reaction is 1-hexadecanoyl-2-(9Z-octadecenoyl)-sn-glycero-3-phosphocholine + H2O = 2-(9Z-octadecenoyl)-sn-glycero-3-phosphocholine + hexadecanoate + H(+). The enzyme catalyses 1-hexadecanoyl-2-(9Z,12Z-octadecadienoyl)-sn-glycero-3-phosphocholine + H2O = (9Z,12Z)-octadecadienoate + 1-hexadecanoyl-sn-glycero-3-phosphocholine + H(+). It carries out the reaction 1-hexadecanoyl-2-(5Z,8Z,11Z,14Z-eicosatetraenoyl)-sn-glycero-3-phosphocholine + H2O = 1-hexadecanoyl-sn-glycero-3-phosphocholine + (5Z,8Z,11Z,14Z)-eicosatetraenoate + H(+). It catalyses the reaction 1-hexadecanoyl-2-(9Z,12Z-octadecadienoyl)-sn-glycero-3-phosphoethanolamine + H2O = 1-hexadecanoyl-sn-glycero-3-phosphoethanolamine + (9Z,12Z)-octadecadienoate + H(+). The catalysed reaction is 1-hexadecanoyl-2-(5Z,8Z,11Z,14Z-eicosatetraenoyl)-sn-glycero-3-phosphoethanolamine + H2O = 1-hexadecanoyl-sn-glycero-3-phosphoethanolamine + (5Z,8Z,11Z,14Z)-eicosatetraenoate + H(+). The enzyme catalyses 1-(5Z,8Z,11Z,14Z-eicosatetraenoyl)-2-O-hexadecyl-sn-glycero-3-phosphocholine + H2O = 2-O-hexadecyl-sn-glycero-3-phosphocholine + (5Z,8Z,11Z,14Z)-eicosatetraenoate + H(+). It carries out the reaction 1-O-hexadecyl-2-(5Z,8Z,11Z,14Z)-eicosatetraenoyl-sn-glycero-3-phosphocholine + H2O = 1-O-hexadecyl-sn-glycero-3-phosphocholine + (5Z,8Z,11Z,14Z)-eicosatetraenoate + H(+). It catalyses the reaction 1-hexadecanoyl-sn-glycero-3-phosphocholine + H2O = sn-glycerol 3-phosphocholine + hexadecanoate + H(+). Stimulated by cytosolic Ca(2+). Its function is as follows. Has calcium-dependent phospholipase and lysophospholipase activities with a potential role in membrane lipid remodeling and biosynthesis of lipid mediators. Preferentially hydrolyzes the ester bond of the fatty acyl group attached at sn-2 position of phospholipids (phospholipase A2 activity). Selectively hydrolyzes sn-2 arachidonoyl group from membrane phospholipids, providing the precursor for eicosanoid biosynthesis. In myocardial mitochondria, plays a major role in arachidonate release that is metabolically channeled to the formation of cardioprotective eicosanoids, epoxyeicosatrienoates (EETs). The protein is Cytosolic phospholipase A2 zeta (PLA2G4F) of Homo sapiens (Human).